A 1186-amino-acid polypeptide reads, in one-letter code: uncharacterized protein (1186 aa).

This is an uncharacterized protein from Acheta domesticus (House cricket).